Here is a 328-residue protein sequence, read N- to C-terminus: DNA polymerase III subunit delta' (328 aa).

As to quaternary structure, DNA polymerase III contains a core (composed of alpha, epsilon and theta chains) that associates with a tau subunit. This core dimerizes to form the POLIII' complex. PolIII' associates with the gamma complex (composed of gamma, delta, delta', psi and chi chains) and with the beta chain to form the complete DNA polymerase III complex.

It catalyses the reaction DNA(n) + a 2'-deoxyribonucleoside 5'-triphosphate = DNA(n+1) + diphosphate. Functionally, DNA polymerase III is a complex, multichain enzyme responsible for most of the replicative synthesis in bacteria. This DNA polymerase also exhibits 3' to 5' exonuclease activity. The protein is DNA polymerase III subunit delta' (holB) of Buchnera aphidicola subsp. Schizaphis graminum (strain Sg).